The chain runs to 436 residues: Ribulose bisphosphate carboxylase large chain (436 aa).

The residue at position 4 (Lys4) is an N6,N6,N6-trimethyllysine. Asn113 and Thr163 together coordinate substrate. Lys165 (proton acceptor) is an active-site residue. Lys167 contributes to the substrate binding site. Mg(2+) is bound by residues Lys191, Asp193, and Glu194. An N6-carboxylysine modification is found at Lys191. His284 acts as the Proton acceptor in catalysis. Positions 285, 317, and 369 each coordinate substrate.

Belongs to the RuBisCO large chain family. Type I subfamily. As to quaternary structure, heterohexadecamer of 8 large chains and 8 small chains; disulfide-linked. The disulfide link is formed within the large subunit homodimers. It depends on Mg(2+) as a cofactor. The disulfide bond which can form in the large chain dimeric partners within the hexadecamer appears to be associated with oxidative stress and protein turnover.

It localises to the plastid. The protein localises to the chloroplast. The enzyme catalyses 2 (2R)-3-phosphoglycerate + 2 H(+) = D-ribulose 1,5-bisphosphate + CO2 + H2O. The catalysed reaction is D-ribulose 1,5-bisphosphate + O2 = 2-phosphoglycolate + (2R)-3-phosphoglycerate + 2 H(+). RuBisCO catalyzes two reactions: the carboxylation of D-ribulose 1,5-bisphosphate, the primary event in carbon dioxide fixation, as well as the oxidative fragmentation of the pentose substrate in the photorespiration process. Both reactions occur simultaneously and in competition at the same active site. The protein is Ribulose bisphosphate carboxylase large chain of Sanguinaria canadensis (Bloodroot).